We begin with the raw amino-acid sequence, 151 residues long: Large ribosomal subunit protein uL13 (151 aa).

The protein belongs to the universal ribosomal protein uL13 family. Part of the 50S ribosomal subunit.

This protein is one of the early assembly proteins of the 50S ribosomal subunit, although it is not seen to bind rRNA by itself. It is important during the early stages of 50S assembly. The polypeptide is Large ribosomal subunit protein uL13 (Petrotoga mobilis (strain DSM 10674 / SJ95)).